The chain runs to 337 residues: Nucleotide sugar transporter SLC35D2 (337 aa).

Over methionine 1 to arginine 27 the chain is Cytoplasmic. Residues leucine 28–leucine 48 form a helical membrane-spanning segment. Residues leucine 49 to glycine 53 are Extracellular-facing. A helical membrane pass occupies residues phenylalanine 54–valine 74. Topologically, residues serine 75 to asparagine 146 are cytoplasmic. The next 2 helical transmembrane spans lie at isoleucine 147–alanine 167 and phenylalanine 168–valine 188. The Cytoplasmic segment spans residues tyrosine 189–lysine 201. A helical membrane pass occupies residues tyrosine 202–serine 222. The Extracellular portion of the chain corresponds to threonine 223–asparagine 237. Residues valine 238–threonine 258 traverse the membrane as a helical segment. The Cytoplasmic segment spans residues valine 259–asparagine 265. A helical transmembrane segment spans residues serine 266 to isoleucine 288. Residues glycine 289–tyrosine 292 lie on the Extracellular side of the membrane. A helical transmembrane segment spans residues isoleucine 293–leucine 315. The Cytoplasmic portion of the chain corresponds to threonine 316–serine 337.

This sequence belongs to the TPT transporter family. SLC35D subfamily. As to expression, highly expressed in heart, kidney, small intestine, placenta, lung and peripheral blood leukocyte. Weakly expressed in skeletal muscle and spleen. Not expressed in brain, colon and thymus.

The protein resides in the golgi apparatus membrane. It catalyses the reaction UMP(out) + UDP-N-acetyl-alpha-D-glucosamine(in) = UMP(in) + UDP-N-acetyl-alpha-D-glucosamine(out). It carries out the reaction UMP(out) + UDP-alpha-D-glucose(in) = UMP(in) + UDP-alpha-D-glucose(out). Its function is as follows. Nucleotide sugar antiporter transporting UDP-N-acetylglucosamine (UDP-GlcNAc) and UDP-glucose (UDP-Glc) from the cytosol into the lumen of the Golgi in exchange of UMP. By supplying UDP-N-acetylglucosamine, a donor substrate to heparan sulfate synthases, probably takes part in the synthesis of these glycoconjugates. The sequence is that of Nucleotide sugar transporter SLC35D2 from Homo sapiens (Human).